Here is a 551-residue protein sequence, read N- to C-terminus: Eukaryotic translation initiation factor 3 subunit D-2 (551 aa).

Positions 105–152 (NNVRARGRTGRGSQAVGGPGGPAAGGSTANSTKYGKGRNTRNTQNVGR) are disordered. The span at 119 to 128 (AVGGPGGPAA) shows a compositional bias: gly residues. The interval 290–304 (QFDLLTVNETSLEPP) is RNA gate.

Belongs to the eIF-3 subunit D family. As to quaternary structure, component of the eukaryotic translation initiation factor 3 (eIF-3) complex. The eIF-3 complex interacts with pix.

Its subcellular location is the cytoplasm. MRNA cap-binding component of the eukaryotic translation initiation factor 3 (eIF-3) complex, which is involved in protein synthesis of a specialized repertoire of mRNAs and, together with other initiation factors, stimulates binding of mRNA and methionyl-tRNAi to the 40S ribosome. The eIF-3 complex specifically targets and initiates translation of a subset of mRNAs involved in cell proliferation. In the eIF-3 complex, eif3d specifically recognizes and binds the 7-methylguanosine cap of a subset of mRNAs. This is Eukaryotic translation initiation factor 3 subunit D-2 from Drosophila erecta (Fruit fly).